The sequence spans 385 residues: Nuclear hormone receptor family member nhr-68 (385 aa).

The nuclear receptor DNA-binding region spans 4–79; the sequence is KEVCLVCQDF…VGMDKTSLQA (76 aa). 2 consecutive NR C4-type zinc fingers follow at residues 7–27 and 43–62; these read CLVC…CNGC and CQFD…CRFC. The segment at 81–110 is disordered; it reads RDPIGYTKRNKKTLRHPMNELSGDESNSCT. An NR LBD domain is found at 145-384; sequence PKRSLKQALC…SFAKELIFGD (240 aa). The segment at 373 to 384 is AF-2; that stretch reads FTSFAKELIFGD.

Belongs to the nuclear hormone receptor family.

Its subcellular location is the nucleus. Probable transcription factor that acts in a feed-forward loop with nhr-10 to activate genes, including itself, involved in the vitamin B12-independent breakdown of the short-chain fatty acid propionate. This pathway is triggered in response to a diet low in vitamin B12, when canonical vitamin B12-dependent propionate breakdown cannot function; the resulting accumulation of propionate is probably sensed by nhr-68 and/or nhr-10. The protein is Nuclear hormone receptor family member nhr-68 of Caenorhabditis elegans.